Here is a 2295-residue protein sequence, read N- to C-terminus: Protein DOP1B (2295 aa).

Residues Ser-556 and Ser-597 each carry the phosphoserine modification. 4 disordered regions span residues 574 to 599 (AGDEEPSFPPLKSEDSGIGLSASSPE), 651 to 684 (GEENKPEEPPGKGNKGQTQSTEHPGRKSSWDPKP), 1034 to 1059 (CKEACGESEPQEGAPEERLPRGQFTT), and 1092 to 1136 (DLPD…LQDL). The segment covering 1111 to 1131 (ADTSSGHTDSENTSTFSSPSH) has biased composition (polar residues). Ser-1167 is modified (phosphoserine).

This sequence belongs to the DOP1 family. As to quaternary structure, homooligomer. Heterotrimer with ATP9A and MON2; this interaction is retromer-independent. Interacts with SNX3. In terms of tissue distribution, expressed in liver, heart and brain.

The protein resides in the early endosome membrane. It localises to the golgi apparatus membrane. Its function is as follows. May play a role in regulating membrane trafficking of cargo proteins. Together with ATP9A and MON2, regulates SNX3 retromer-mediated endosomal sorting of WLS away from lysosomal degradation. The protein is Protein DOP1B (Dop1b) of Mus musculus (Mouse).